We begin with the raw amino-acid sequence, 120 residues long: Large ribosomal subunit protein bL19 (120 aa).

This sequence belongs to the bacterial ribosomal protein bL19 family.

This protein is located at the 30S-50S ribosomal subunit interface and may play a role in the structure and function of the aminoacyl-tRNA binding site. This is Large ribosomal subunit protein bL19 from Acaryochloris marina (strain MBIC 11017).